Consider the following 224-residue polypeptide: uncharacterized protein (224 aa).

Residues 2–221 (IEAKNVWKIY…KLRDGEIVEI (220 aa)) form the ABC transporter domain. Residue 38-45 (GPSGCGKS) coordinates ATP.

This sequence belongs to the ABC transporter superfamily.

This is an uncharacterized protein from Methanocaldococcus jannaschii (strain ATCC 43067 / DSM 2661 / JAL-1 / JCM 10045 / NBRC 100440) (Methanococcus jannaschii).